The sequence spans 216 residues: Flavin prenyltransferase UbiX (216 aa).

FMN is bound by residues 9-11 (GAS), Ser-35, and Arg-144. The dimethylallyl phosphate site is built by Tyr-174 and Arg-190.

This sequence belongs to the UbiX/PAD1 family.

The catalysed reaction is dimethylallyl phosphate + FMNH2 = prenylated FMNH2 + phosphate. In terms of biological role, flavin prenyltransferase that catalyzes the synthesis of the prenylated FMN cofactor (prenyl-FMN) for 4-hydroxy-3-polyprenylbenzoic acid decarboxylase UbiD. The prenyltransferase is metal-independent and links a dimethylallyl moiety from dimethylallyl monophosphate (DMAP) to the flavin N5 and C6 atoms of FMN. The protein is Flavin prenyltransferase UbiX of Streptomyces coelicolor (strain ATCC BAA-471 / A3(2) / M145).